The primary structure comprises 213 residues: Thymidylate kinase (213 aa).

Residue 10–17 (GLEGAGKT) participates in ATP binding.

It belongs to the thymidylate kinase family.

The catalysed reaction is dTMP + ATP = dTDP + ADP. In terms of biological role, phosphorylation of dTMP to form dTDP in both de novo and salvage pathways of dTTP synthesis. In Escherichia coli O6:K15:H31 (strain 536 / UPEC), this protein is Thymidylate kinase.